Consider the following 215-residue polypeptide: MKYELTATEARVIGCLLEKQVTTPEQYPLSVNGVVTACNQKTNREPVMNLTEQEVQEQLDNLVKRHFLRTVSGFGNRVTKYEQRFCNSEFGDLKLSAAEVALVTTLLLRGAQTPGELRSRASRMHEFSDMAEVESTLERLASREDGPYVVRLAREPGKRESRYMHLFCGDVDELSLQTSAPESASGDLQSRVEALESEVAELKQRLDSLLAHLGE.

The protein belongs to the UPF0502 family.

The sequence is that of UPF0502 protein YceH from Salmonella paratyphi B (strain ATCC BAA-1250 / SPB7).